The primary structure comprises 298 residues: NAD kinase (298 aa).

Catalysis depends on aspartate 80, which acts as the Proton acceptor. NAD(+)-binding positions include aspartate 80–glycine 81, asparagine 154–aspartate 155, arginine 182, aspartate 184, threonine 195–serine 200, alanine 219, and glutamine 253.

Belongs to the NAD kinase family. A divalent metal cation is required as a cofactor.

Its subcellular location is the cytoplasm. The enzyme catalyses NAD(+) + ATP = ADP + NADP(+) + H(+). Its function is as follows. Involved in the regulation of the intracellular balance of NAD and NADP, and is a key enzyme in the biosynthesis of NADP. Catalyzes specifically the phosphorylation on 2'-hydroxyl of the adenosine moiety of NAD to yield NADP. The protein is NAD kinase of Delftia acidovorans (strain DSM 14801 / SPH-1).